The chain runs to 493 residues: Glutamyl-tRNA(Gln) amidotransferase subunit A (493 aa).

Catalysis depends on charge relay system residues lysine 81 and serine 156. Serine 180 (acyl-ester intermediate) is an active-site residue.

Belongs to the amidase family. GatA subfamily. Heterotrimer of A, B and C subunits.

The catalysed reaction is L-glutamyl-tRNA(Gln) + L-glutamine + ATP + H2O = L-glutaminyl-tRNA(Gln) + L-glutamate + ADP + phosphate + H(+). Functionally, allows the formation of correctly charged Gln-tRNA(Gln) through the transamidation of misacylated Glu-tRNA(Gln) in organisms which lack glutaminyl-tRNA synthetase. The reaction takes place in the presence of glutamine and ATP through an activated gamma-phospho-Glu-tRNA(Gln). This is Glutamyl-tRNA(Gln) amidotransferase subunit A from Mycobacterium avium (strain 104).